Consider the following 169-residue polypeptide: Alpha-S2-casein-like B (169 aa).

Residues 1 to 15 (MKFIILTCLLAVALA) form the signal peptide.

It belongs to the alpha-casein family. Mammary gland specific. Secreted in milk.

Its subcellular location is the secreted. In terms of biological role, important role in the capacity of milk to transport calcium phosphate. The chain is Alpha-S2-casein-like B (Csn1s2b) from Rattus norvegicus (Rat).